The chain runs to 695 residues: F-box only protein 34 (695 aa).

3 disordered regions span residues 239 to 275, 316 to 373, and 472 to 524; these read GQSR…QGEP, LTNG…CPSL, and GQDQ…PGGS. The F-box domain occupies 556–608; that stretch reads QQYMACLPHHIIVKIFRLLPTLSLAILKCTCRYFKSIIEYYNIRPADSRWVRD.

Directly interacts with SKP1 and CUL1.

Substrate-recognition component of the SCF (SKP1-CUL1-F-box protein)-type E3 ubiquitin ligase complex. This Mus musculus (Mouse) protein is F-box only protein 34 (Fbxo34).